The chain runs to 352 residues: Protein NDRG4 (352 aa).

Phosphoserine is present on residues Ser298, Ser317, and Ser323. Positions 301–352 are disordered; that stretch reads AVPSASMTRLARSRTASLTSASSVDGSRPQPCTHSDSSEGMGQVNHTMEVSC. Residues 308 to 323 are compositionally biased toward low complexity; the sequence is TRLARSRTASLTSASS. The span at 330-352 shows a compositional bias: polar residues; sequence QPCTHSDSSEGMGQVNHTMEVSC.

Belongs to the NDRG family. As to expression, expressed in the brain and heart, weakly in the kidney; most prominently in postnatal brain where it is expressed widely in the olfactory bulb, cerebral cortex, hippocampus, cerebellum, thalamus, and medulla oblongata.

It localises to the cytoplasm. The protein localises to the cytosol. Functionally, contributes to the maintenance of intracerebral BDNF levels within the normal range, which is necessary for the preservation of spatial learning and the resistance to neuronal cell death caused by ischemic stress. May enhance growth factor-induced ERK1 and ERK2 phosphorylation, including that induced by NGF. May attenuate NGF-promoted ELK1 phosphorylation in a microtubule-dependent manner. This chain is Protein NDRG4 (Ndrg4), found in Rattus norvegicus (Rat).